Reading from the N-terminus, the 296-residue chain is Ribosomal RNA small subunit methyltransferase A (296 aa).

Residues Asn32, Leu34, Gly59, Glu80, Asp105, and Asn130 each coordinate S-adenosyl-L-methionine.

Belongs to the class I-like SAM-binding methyltransferase superfamily. rRNA adenine N(6)-methyltransferase family. RsmA subfamily.

It localises to the cytoplasm. It carries out the reaction adenosine(1518)/adenosine(1519) in 16S rRNA + 4 S-adenosyl-L-methionine = N(6)-dimethyladenosine(1518)/N(6)-dimethyladenosine(1519) in 16S rRNA + 4 S-adenosyl-L-homocysteine + 4 H(+). Functionally, specifically dimethylates two adjacent adenosines (A1518 and A1519) in the loop of a conserved hairpin near the 3'-end of 16S rRNA in the 30S particle. May play a critical role in biogenesis of 30S subunits. The protein is Ribosomal RNA small subunit methyltransferase A of Ligilactobacillus salivarius (strain UCC118) (Lactobacillus salivarius).